A 143-amino-acid polypeptide reads, in one-letter code: Nucleoside diphosphate kinase (143 aa).

Lys-11, Phe-59, Arg-87, Thr-93, Arg-104, and Asn-114 together coordinate ATP. Residue His-117 is the Pros-phosphohistidine intermediate of the active site.

This sequence belongs to the NDK family. Homotetramer. It depends on Mg(2+) as a cofactor.

The protein localises to the cytoplasm. The enzyme catalyses a 2'-deoxyribonucleoside 5'-diphosphate + ATP = a 2'-deoxyribonucleoside 5'-triphosphate + ADP. The catalysed reaction is a ribonucleoside 5'-diphosphate + ATP = a ribonucleoside 5'-triphosphate + ADP. Functionally, major role in the synthesis of nucleoside triphosphates other than ATP. The ATP gamma phosphate is transferred to the NDP beta phosphate via a ping-pong mechanism, using a phosphorylated active-site intermediate. This chain is Nucleoside diphosphate kinase, found in Stutzerimonas stutzeri (strain A1501) (Pseudomonas stutzeri).